The following is a 463-amino-acid chain: Lipase 6 (463 aa).

The N-terminal stretch at 1–16 (MRDLILFLSLLHTIFA) is a signal peptide. Cysteines 112 and 285 form a disulfide. The active-site Charge relay system is the Ser-196. Asn-231 is a glycosylation site (N-linked (GlcNAc...) asparagine). Residues Asp-348 and His-381 each act as charge relay system in the active site. Cysteines 364 and 409 form a disulfide. Asn-422 is a glycosylation site (N-linked (GlcNAc...) asparagine).

This sequence belongs to the AB hydrolase superfamily. Lipase family. Class Lip subfamily.

The protein resides in the secreted. The catalysed reaction is a triacylglycerol + H2O = a diacylglycerol + a fatty acid + H(+). Its function is as follows. Secreted lipase that is able to hydrolyze both the neutral triacylglycerols and the monopalmitate ester Tween 40, allowing the use of hydrolyzed products as carbon sources. Has broad lipolytic activity, which may be important for colonization and subsequent infection, therefore contributing to the persistence and virulence in human tissue. The protein is Lipase 6 of Candida albicans (strain SC5314 / ATCC MYA-2876) (Yeast).